We begin with the raw amino-acid sequence, 116 residues long: Ribonuclease P protein component 2 (116 aa).

This sequence belongs to the eukaryotic/archaeal RNase P protein component 2 family. In terms of assembly, consists of a catalytic RNA component and at least 4-5 protein subunits.

The protein resides in the cytoplasm. The enzyme catalyses Endonucleolytic cleavage of RNA, removing 5'-extranucleotides from tRNA precursor.. In terms of biological role, part of ribonuclease P, a protein complex that generates mature tRNA molecules by cleaving their 5'-ends. The chain is Ribonuclease P protein component 2 from Methanosarcina mazei (strain ATCC BAA-159 / DSM 3647 / Goe1 / Go1 / JCM 11833 / OCM 88) (Methanosarcina frisia).